We begin with the raw amino-acid sequence, 902 residues long: Protein translocase subunit SecA (902 aa).

Residues Gln85, 103–107 (GEGKT), and Asp492 contribute to the ATP site. The segment at 846–902 (LSYSGGGEEPNQRPKSPRRRSERKIGPNEPCPCGSGKKFKKCHGRVGAPPLPTSQSQ) is disordered. Zn(2+) is bound by residues Cys876, Cys878, Cys887, and His888.

It belongs to the SecA family. As to quaternary structure, monomer and homodimer. Part of the essential Sec protein translocation apparatus which comprises SecA, SecYEG and auxiliary proteins SecDF. Other proteins may also be involved. Requires Zn(2+) as cofactor.

It is found in the cell membrane. Its subcellular location is the cytoplasm. The enzyme catalyses ATP + H2O + cellular proteinSide 1 = ADP + phosphate + cellular proteinSide 2.. Its function is as follows. Part of the Sec protein translocase complex. Interacts with the SecYEG preprotein conducting channel. Has a central role in coupling the hydrolysis of ATP to the transfer of proteins into and across the cell membrane, serving as an ATP-driven molecular motor driving the stepwise translocation of polypeptide chains across the membrane. In Rubrobacter xylanophilus (strain DSM 9941 / JCM 11954 / NBRC 16129 / PRD-1), this protein is Protein translocase subunit SecA.